The primary structure comprises 405 residues: DNA primase DnaG (405 aa).

Residues 172-248 (DAIIIVEGRA…HVDYIARAPP (77 aa)) enclose the Toprim domain. Mg(2+) is bound by residues glutamate 178, aspartate 222, and aspartate 224. Residues 279 to 303 (ASGERAEAPPQPAQQPQQEQPAPQR) form a disordered region. Positions 292–303 (QQPQQEQPAPQR) are enriched in low complexity.

Belongs to the archaeal DnaG primase family. As to quaternary structure, forms a ternary complex with MCM helicase and DNA. Component of the archaeal exosome complex. The cofactor is Mg(2+).

The enzyme catalyses ssDNA + n NTP = ssDNA/pppN(pN)n-1 hybrid + (n-1) diphosphate.. Its function is as follows. RNA polymerase that catalyzes the synthesis of short RNA molecules used as primers for DNA polymerase during DNA replication. Also part of the exosome, which is a complex involved in RNA degradation. Acts as a poly(A)-binding protein that enhances the interaction between heteromeric, adenine-rich transcripts and the exosome. In Pyrobaculum arsenaticum (strain DSM 13514 / JCM 11321 / PZ6), this protein is DNA primase DnaG.